A 1411-amino-acid polypeptide reads, in one-letter code: Regulating synaptic membrane exocytosis protein 2 (1411 aa).

Residues Met-1–Thr-33 form a disordered region. A RabBD domain is found at Met-26–Ser-185. The segment at Lys-117–Glu-173 adopts an FYVE-type zinc-finger fold. Cys-123, Cys-126, Cys-139, Cys-142, Cys-147, Cys-150, Cys-165, and Cys-168 together coordinate Zn(2+). Composition is skewed to basic and acidic residues over residues Asn-203–Glu-216, Asp-273–Tyr-287, Asp-318–Arg-329, Arg-348–Ser-366, Glu-382–Asp-401, and Glu-410–Ala-434. Disordered stretches follow at residues Asn-203–Gln-598 and Ser-623–Ser-650. At Ser-400 the chain carries Phosphoserine. Residues Gly-451–Ser-463 are compositionally biased toward polar residues. The segment covering Asp-475–Asp-492 has biased composition (basic and acidic residues). Residues Arg-510–Ser-521 show a composition bias toward polar residues. A compositionally biased stretch (basic residues) spans Lys-528–Lys-537. Residues Ser-558–Ser-568 show a composition bias toward acidic residues. Composition is skewed to basic and acidic residues over residues Val-569 to Ser-583 and Asn-634 to Pro-644. Residues Asp-668–Arg-754 enclose the PDZ domain. Position 689 is a phosphothreonine (Thr-689). The tract at residues Ile-762–Met-793 is disordered. Ser-791 and Ser-794 each carry phosphoserine. Positions Leu-805 to Tyr-928 constitute a C2 1 domain. Disordered regions lie at residues Pro-939–Ser-973 and Asp-993–Thr-1190. 2 stretches are compositionally biased toward polar residues: residues Leu-994 to Gly-1015 and Arg-1049 to Ser-1059. The segment covering Arg-1060 to Asp-1113 has biased composition (basic and acidic residues). Over residues Gly-1143–Pro-1153 the composition is skewed to polar residues. Ser-1148 is modified (phosphoserine). Residues Ala-1257–Phe-1375 enclose the C2 2 domain. Ser-1396 and Ser-1399 each carry phosphoserine.

In terms of assembly, interacts with RAB3A and RAB3B that have been activated by GTP-binding. Interacts with RAB3C, RAB3D and RAB26. Interacts with TSPOAP1 and RIMBP2. Interacts with PPFIA3 and PPFIA4. Interacts via its zinc finger with the first C2 domain of UNC13A. Forms a complex consisting of UNC13A, RIMS2 and RAB3A. Heterodimer with PCLO. Part of a ternary complex involving PCLO and EPAC2. Widely expressed. Expressed in melanocytes. In fetal tissues, predominantly expressed in the brain. In the retina, expressed in the outer plexiform layer (at protein level). In the cerebellum, expressed in Purkinje cells (at protein level). In the pancreas, expressed in Langerhans islets (at protein level).

The protein localises to the cell membrane. The protein resides in the synapse. Its subcellular location is the presynaptic cell membrane. In terms of biological role, rab effector involved in exocytosis. May act as scaffold protein. Plays a role in dendrite formation by melanocytes. This Homo sapiens (Human) protein is Regulating synaptic membrane exocytosis protein 2 (RIMS2).